Consider the following 436-residue polypeptide: MPLLNEYIRQLLPEMTQWRRDLHHYAESGWVEFRTASKVAEQLHQLGYDLTLGRDAVDADSRMGLPDEITLANAFQRAREQGAPEPWLSAFEGGFTGIVATLDTGRPGPTLAFRVDMDALDLNEDTDGHHRPFREDFASCNPGMMHACGHDGHTAIGLGLAHVLKQYADRLHGVIKLIFQPAEEGTRGARAMVAAGVVDDVDYFTAIHIGTGVPAGTVVCGSDNFMATTKFDALFTGVAAHAGGKPEDGRNALLAAAQAAIALHAIAPHSAGASRVNVGVMQAGTGRNVVPSGALLKVETRGETEDINRYVFERAREVIHGAAAMYGASVELRLMGAATSSAPSPGWVHYLREQAARVPGVEQAIDRIAAPAGSEDATLMMARVQQHNGLASYMVFGTELSAGHHNEQFDFDENVMAIAVETLALTALNFPWQRGV.

It belongs to the peptidase M20 family. As to quaternary structure, monomer.

The enzyme catalyses (indol-3-yl)acetyl-L-aspartate + H2O = (indol-3-yl)acetate + L-aspartate. In terms of biological role, hydrolyzes indole-3-acetyl-aspartate (IAA-Asp) to indole-3-acetic acid (IAA). Shows an exclusively high substrate specificity for IAA-Asp. The protein is Indole-3-acetyl-aspartic acid hydrolase of Enterobacter agglomerans (Erwinia herbicola).